Consider the following 105-residue polypeptide: Large ribosomal subunit protein uL24 (105 aa).

This sequence belongs to the universal ribosomal protein uL24 family. Part of the 50S ribosomal subunit.

Functionally, one of two assembly initiator proteins, it binds directly to the 5'-end of the 23S rRNA, where it nucleates assembly of the 50S subunit. In terms of biological role, one of the proteins that surrounds the polypeptide exit tunnel on the outside of the subunit. This chain is Large ribosomal subunit protein uL24, found in Mycolicibacterium smegmatis (strain ATCC 700084 / mc(2)155) (Mycobacterium smegmatis).